We begin with the raw amino-acid sequence, 500 residues long: Cobyric acid synthase (500 aa).

The 190-residue stretch at 255-444 folds into the GATase cobBQ-type domain; sequence AIDIAVIRCP…MHDLFHNDAF (190 aa). The active-site Nucleophile is the cysteine 337. The active site involves histidine 436.

Belongs to the CobB/CobQ family. CobQ subfamily.

It participates in cofactor biosynthesis; adenosylcobalamin biosynthesis. In terms of biological role, catalyzes amidations at positions B, D, E, and G on adenosylcobyrinic A,C-diamide. NH(2) groups are provided by glutamine, and one molecule of ATP is hydrogenolyzed for each amidation. The protein is Cobyric acid synthase of Geobacillus thermodenitrificans (strain NG80-2).